Consider the following 59-residue polypeptide: Large ribosomal subunit protein uL30 (59 aa).

The protein belongs to the universal ribosomal protein uL30 family. In terms of assembly, part of the 50S ribosomal subunit.

This is Large ribosomal subunit protein uL30 from Psychrobacter arcticus (strain DSM 17307 / VKM B-2377 / 273-4).